We begin with the raw amino-acid sequence, 144 residues long: 3-hydroxyacyl-[acyl-carrier-protein] dehydratase FabZ (144 aa).

His51 is a catalytic residue.

This sequence belongs to the thioester dehydratase family. FabZ subfamily.

It localises to the cytoplasm. The catalysed reaction is a (3R)-hydroxyacyl-[ACP] = a (2E)-enoyl-[ACP] + H2O. In terms of biological role, involved in unsaturated fatty acids biosynthesis. Catalyzes the dehydration of short chain beta-hydroxyacyl-ACPs and long chain saturated and unsaturated beta-hydroxyacyl-ACPs. The polypeptide is 3-hydroxyacyl-[acyl-carrier-protein] dehydratase FabZ (fabZ1) (Enterococcus faecalis (strain ATCC 700802 / V583)).